A 224-amino-acid chain; its full sequence is 7-cyano-7-deazaguanine synthase (224 aa).

Position 8 to 18 (8 to 18 (LSGGMDSAAVI)) interacts with ATP. Residues Cys186, Cys196, Cys199, and Cys202 each contribute to the Zn(2+) site.

This sequence belongs to the QueC family. It depends on Zn(2+) as a cofactor.

The catalysed reaction is 7-carboxy-7-deazaguanine + NH4(+) + ATP = 7-cyano-7-deazaguanine + ADP + phosphate + H2O + H(+). It functions in the pathway purine metabolism; 7-cyano-7-deazaguanine biosynthesis. Its function is as follows. Catalyzes the ATP-dependent conversion of 7-carboxy-7-deazaguanine (CDG) to 7-cyano-7-deazaguanine (preQ(0)). This chain is 7-cyano-7-deazaguanine synthase, found in Xanthomonas axonopodis pv. citri (strain 306).